Consider the following 418-residue polypeptide: Cyclin-A1 (418 aa).

The protein belongs to the cyclin family. Cyclin AB subfamily. In terms of assembly, interacts with the CDK1 and the CDK2 protein kinases to form a serine/threonine kinase holoenzyme complex. The cyclin subunit imparts substrate specificity to the complex.

Its subcellular location is the nucleus. Its function is as follows. May be involved in the control of the cell cycle at the G1/S (start) and G2/M (mitosis) transitions. This Xenopus laevis (African clawed frog) protein is Cyclin-A1 (ccna1).